A 1169-amino-acid polypeptide reads, in one-letter code: RecBCD enzyme subunit RecB (1169 aa).

The UvrD-like helicase ATP-binding domain maps to Met1–Ser436. Residues Met1 to Ile839 are DNA-binding and helicase activity, interacts with RecC. Ala18–Thr25 serves as a coordination point for ATP. In terms of domain architecture, UvrD-like helicase C-terminal spans Ile459–Gly746. Residues Lys883 to Leu1169 are nuclease activity, interacts with RecD and RecA. 3 residues coordinate Mg(2+): His939, Asp1052, and Asp1065. Asp1065 functions as the For nuclease activity in the catalytic mechanism.

Belongs to the helicase family. UvrD subfamily. In terms of assembly, heterotrimer of RecB, RecC and RecD. All subunits contribute to DNA-binding. Interacts with RecA. Mg(2+) is required as a cofactor.

It carries out the reaction Exonucleolytic cleavage (in the presence of ATP) in either 5'- to 3'- or 3'- to 5'-direction to yield 5'-phosphooligonucleotides.. The enzyme catalyses Couples ATP hydrolysis with the unwinding of duplex DNA by translocating in the 3'-5' direction.. The catalysed reaction is ATP + H2O = ADP + phosphate + H(+). In terms of biological role, a helicase/nuclease that prepares dsDNA breaks (DSB) for recombinational DNA repair. Binds to DSBs and unwinds DNA via a highly rapid and processive ATP-dependent bidirectional helicase activity. Unwinds dsDNA until it encounters a Chi (crossover hotspot instigator) sequence from the 3' direction. Cuts ssDNA a few nucleotides 3' to the Chi site. The properties and activities of the enzyme are changed at Chi. The Chi-altered holoenzyme produces a long 3'-ssDNA overhang and facilitates RecA-binding to the ssDNA for homologous DNA recombination and repair. Holoenzyme degrades any linearized DNA that is unable to undergo homologous recombination. In the holoenzyme this subunit contributes ATPase, 3'-5' helicase, exonuclease activity and loads RecA onto ssDNA. The polypeptide is RecBCD enzyme subunit RecB (Borreliella burgdorferi (strain ATCC 35210 / DSM 4680 / CIP 102532 / B31) (Borrelia burgdorferi)).